We begin with the raw amino-acid sequence, 364 residues long: Probable zinc transporter 10 (364 aa).

The signal sequence occupies residues 1 to 28; it reads MTKSHVIFSASIALFLLLSISHFPGALS. The Extracellular segment spans residues 29 to 52; that stretch reads QSNKDCQSKSNYSCIDKNKALDLK. Residues 53 to 73 form a helical membrane-spanning segment; that stretch reads LLSIFSILITSLIGVCLPFFA. The Cytoplasmic segment spans residues 74–85; sequence RSIPAFQPEKSH. A helical transmembrane segment spans residues 86–106; it reads FLIVKSFASGIILSTGFMHVL. Over 107–125 the chain is Extracellular; it reads PDSFEMLSSPCLNDNPWHK. A helical membrane pass occupies residues 126-146; the sequence is FPFAGFVAMMSAVFTLMVDSI. Residues 147-209 are Cytoplasmic-facing; sequence TTSVFTKSGR…GSYLQLLRYR (63 aa). The helical transmembrane segment at 210–230 threads the bilayer; sequence ILAIVLELGIVVQSIVIGLSV. At 231–241 the chain is on the extracellular side; sequence GDTNNTCTIKG. Residues 242–262 traverse the membrane as a helical segment; that stretch reads LVAALCFHQMFEGMGLGGCIL. Residues 263 to 271 lie on the Cytoplasmic side of the membrane; the sequence is QAEYGWVKK. A helical transmembrane segment spans residues 272-292; that stretch reads AVMAFFFAVTTPFGVVLGMAL. Topologically, residues 293 to 303 are extracellular; that stretch reads SKTYKENSPES. Residues 304-324 traverse the membrane as a helical segment; it reads LITVGLLNASSAGLLIYMALV. The Cytoplasmic portion of the chain corresponds to 325–343; sequence DLLAADFMGQKMQRSIKLQ. Residues 344–364 traverse the membrane as a helical segment; it reads LKSYAAVLLGAGGMSVMAKWA.

This sequence belongs to the ZIP transporter (TC 2.A.5) family.

It localises to the cell membrane. Its function is as follows. Probably mediates zinc uptake from the rhizosphere. The chain is Probable zinc transporter 10 (ZIP10) from Arabidopsis thaliana (Mouse-ear cress).